We begin with the raw amino-acid sequence, 345 residues long: Protein RecA (345 aa).

An ATP-binding site is contributed by 65–72 (GPESSGKT).

The protein belongs to the RecA family.

It is found in the cytoplasm. Can catalyze the hydrolysis of ATP in the presence of single-stranded DNA, the ATP-dependent uptake of single-stranded DNA by duplex DNA, and the ATP-dependent hybridization of homologous single-stranded DNAs. It interacts with LexA causing its activation and leading to its autocatalytic cleavage. This is Protein RecA from Stenotrophomonas maltophilia (strain R551-3).